The primary structure comprises 578 residues: Zinc finger protein with KRAB and SCAN domains 8 (578 aa).

Residues 1-20 (MAEESRKPSAPSPPDQTPEE) form a disordered region. Phosphoserine is present on serine 12. A Glycyl lysine isopeptide (Lys-Gly) (interchain with G-Cter in SUMO2) cross-link involves residue lysine 26. Positions 51 to 133 (RLRFRQLCYQ…TLLEDLERQI (83 aa)) constitute an SCAN box domain. The disordered stretch occupies residues 158–205 (ASAPEPPNTQLQSEATQHKSPVPQESQERSMSTSQSPTRSQKGSSGDQ). Over residues 165–205 (NTQLQSEATQHKSPVPQESQERSMSTSQSPTRSQKGSSGDQ) the composition is skewed to polar residues. Glycyl lysine isopeptide (Lys-Gly) (interchain with G-Cter in SUMO2) cross-links involve residues lysine 176 and lysine 199. Serine 201 is modified (phosphoserine). One can recognise a KRAB domain in the interval 220–316 (EKIEDMAVSL…GRLERQRGNP (97 aa)). Glycyl lysine isopeptide (Lys-Gly) (interchain with G-Cter in SUMO2) cross-links involve residues lysine 221, lysine 272, and lysine 288. 2 C2H2-type zinc fingers span residues 322–344 (HKCDECGKSFAQSSGLVRHWRIH) and 350–372 (YQCNVCGKAFSYRSALLSHQDIH). Glycyl lysine isopeptide (Lys-Gly) (interchain with G-Cter in SUMO2) cross-links involve residues lysine 374 and lysine 376. C2H2-type zinc fingers lie at residues 378–400 (YHCKECGKAFSQNTGLILHQRIH), 406–428 (YQCNQCGKAFSQSAGLILHQRIH), 434–456 (YECNECGKAFSHSSHLIGHQRIH), 462–484 (YECDECGKTFRRSSHLIGHQRSH), 490–512 (YKCNECGRAFSQKSGLIEHQRIH), 518–540 (YKCKECGKAFNGNTGLIQHLRIH), and 546–568 (YQCNECGKAFIQRSSLIRHQRIH). Glycyl lysine isopeptide (Lys-Gly) (interchain with G-Cter in SUMO2) cross-links involve residues lysine 413 and lysine 441. Lysine 502 participates in a covalent cross-link: Glycyl lysine isopeptide (Lys-Gly) (interchain with G-Cter in SUMO2). Lysine 572 participates in a covalent cross-link: Glycyl lysine isopeptide (Lys-Gly) (interchain with G-Cter in SUMO2).

It belongs to the krueppel C2H2-type zinc-finger protein family.

Its subcellular location is the nucleus. In terms of biological role, may be involved in transcriptional regulation. The chain is Zinc finger protein with KRAB and SCAN domains 8 (ZKSCAN8) from Pan paniscus (Pygmy chimpanzee).